Here is an 810-residue protein sequence, read N- to C-terminus: E3 ubiquitin-protein ligase RNF10 (810 aa).

Residues 1–31 are compositionally biased toward low complexity; sequence MPQSSPSAAATASDMDKNSGSSSSSASSGSS. Residues 1-119 are disordered; the sequence is MPQSSPSAAA…SFNGGRRDEV (119 aa). Residue serine 5 is modified to Phosphoserine. Over residues 76–92 the composition is skewed to polar residues; that stretch reads NFINQSRRSNSQKSKTF. Positions 101 to 185 are interaction with MEOX2; that stretch reads GGSSKLFSSS…FNKELFLQAN (85 aa). Over residues 104 to 113 the composition is skewed to low complexity; sequence SKLFSSSFNG. Residues serine 110 and serine 128 each carry the phosphoserine modification. The RING-type zinc-finger motif lies at 225 to 267; the sequence is CPICLYPPTAAKITRCGHIFCWACILHYLSLSEKTWSKCPICY. Disordered stretches follow at residues 598–623, 652–674, 722–759, and 775–810; these read KRKR…EENK, DSAL…LSRS, ADVW…PVPS, and LDTP…VHTK. Over residues 607–623 the composition is skewed to basic and acidic residues; it reads AREERRRERRIEMEENK. Residues 652-661 are compositionally biased toward polar residues; that stretch reads DSALGSTSTE. A compositionally biased stretch (low complexity) spans 662 to 674; sequence GRGALSLSPLSRS. Positions 722–735 are enriched in basic and acidic residues; the sequence is ADVWPKTAPKKDEN. Residues 801–810 are compositionally biased toward polar residues; it reads LFSTSVVHTK.

This sequence belongs to the RNF10 family. In terms of assembly, interacts with MEOX2.

Its subcellular location is the cytoplasm. The protein resides in the nucleus. It catalyses the reaction S-ubiquitinyl-[E2 ubiquitin-conjugating enzyme]-L-cysteine + [acceptor protein]-L-lysine = [E2 ubiquitin-conjugating enzyme]-L-cysteine + N(6)-ubiquitinyl-[acceptor protein]-L-lysine.. It functions in the pathway protein modification; protein ubiquitination. Functionally, E3 ubiquitin-protein ligase that catalyzes monoubiquitination of 40S ribosomal proteins RPS2/us5 and RPS3/us3 in response to ribosome stalling. Part of a ribosome quality control that takes place when ribosomes have stalled during translation initiation (iRQC): RNF10 acts by mediating monoubiquitination of RPS2/us5 and RPS3/us3, promoting their degradation by the proteasome. Also promotes ubiquitination of 40S ribosomal proteins in response to ribosome stalling during translation elongation. The action of RNF10 in iRQC is counteracted by USP10. May also act as a transcriptional factor involved in the regulation of MAG (Myelin-associated glycoprotein) expression. Acts as a regulator of Schwann cell differentiation and myelination. This Bos taurus (Bovine) protein is E3 ubiquitin-protein ligase RNF10 (RNF10).